A 92-amino-acid chain; its full sequence is Small ribosomal subunit protein uS19 (92 aa).

Belongs to the universal ribosomal protein uS19 family.

Its function is as follows. Protein S19 forms a complex with S13 that binds strongly to the 16S ribosomal RNA. This is Small ribosomal subunit protein uS19 from Acaryochloris marina (strain MBIC 11017).